Here is a 257-residue protein sequence, read N- to C-terminus: Large ribosomal subunit protein eL8z (257 aa).

It belongs to the eukaryotic ribosomal protein eL8 family.

This Arabidopsis thaliana (Mouse-ear cress) protein is Large ribosomal subunit protein eL8z (RPL7AA).